Reading from the N-terminus, the 480-residue chain is ATP synthase subunit beta, chloroplastic (480 aa).

161 to 168 serves as a coordination point for ATP; that stretch reads GGAGVGKT.

It belongs to the ATPase alpha/beta chains family. In terms of assembly, F-type ATPases have 2 components, CF(1) - the catalytic core - and CF(0) - the membrane proton channel. CF(1) has five subunits: alpha(3), beta(3), gamma(1), delta(1), epsilon(1). CF(0) has four main subunits: a(1), b(1), b'(1) and c(9-12).

Its subcellular location is the plastid. The protein resides in the chloroplast thylakoid membrane. The catalysed reaction is ATP + H2O + 4 H(+)(in) = ADP + phosphate + 5 H(+)(out). Functionally, produces ATP from ADP in the presence of a proton gradient across the membrane. The catalytic sites are hosted primarily by the beta subunits. This Tetradesmus obliquus (Green alga) protein is ATP synthase subunit beta, chloroplastic.